Reading from the N-terminus, the 328-residue chain is Malate dehydrogenase (328 aa).

11 to 17 (GAAGQIG) is an NAD(+) binding site. Arg94 and Arg100 together coordinate substrate. NAD(+)-binding positions include Asn107, Gln114, and 131 to 133 (VGN). Asn133 and Arg164 together coordinate substrate. His189 acts as the Proton acceptor in catalysis.

The protein belongs to the LDH/MDH superfamily. MDH type 2 family.

It carries out the reaction (S)-malate + NAD(+) = oxaloacetate + NADH + H(+). In terms of biological role, catalyzes the reversible oxidation of malate to oxaloacetate. The sequence is that of Malate dehydrogenase from Xanthomonas oryzae pv. oryzae (strain MAFF 311018).